The following is a 653-amino-acid chain: Transmembrane and coiled-coil domains protein 1 (653 aa).

The residue at position 1 (M1) is an N-acetylmethionine. Disordered stretches follow at residues 1 to 35 (MEPS…QKLS), 58 to 78 (HQRR…ADPE), 112 to 165 (PPKM…APTS), and 204 to 227 (TSSA…TPDP). Residues 1–591 (MEPSGSEQLF…ARNLLGKLIN (591 aa)) lie on the Cytoplasmic side of the membrane. Residues 20–34 (QDAEARKQTESEQKL) are compositionally biased toward basic and acidic residues. Residues 64 to 74 (SVSPHDVQQIQ) show a composition bias toward polar residues. Positions 113 to 125 (PKMKRGTSLHSRR) are enriched in basic residues. The span at 135-144 (PQINRKSGQE) shows a compositional bias: polar residues. The span at 153 to 165 (RPRSSSTTDAPTS) shows a compositional bias: low complexity. A compositionally biased stretch (polar residues) spans 204–218 (TSSAVASSTDGSIHT). Residues 228–313 (QRTKAAIAHL…RKLREVEQNG (86 aa)) adopt a coiled-coil conformation. Phosphoserine is present on residues S382 and S414. The disordered stretch occupies residues 415–437 (PKYGSEEDCSSATSGSVGANSTT). Residues 424–437 (SSATSGSVGANSTT) show a composition bias toward polar residues. Residues 458–576 (GFDALLHEIQ…QQQQVVQLEG (119 aa)) adopt a coiled-coil conformation. The next 2 membrane-spanning stretches (helical) occupy residues 592-612 (ILLA…NCVV) and 625-645 (LFLV…FSYV). The Cytoplasmic portion of the chain corresponds to 646–653 (ERFFSSPR).

Belongs to the TEX28 family. In terms of assembly, may form homodimers and heterodimers with TMCC2 or TMCC3 via the coiled-coil domains. Interacts with ribosomal proteins RPL4 and RPS6.

It is found in the endoplasmic reticulum membrane. In terms of biological role, endoplasmic reticulum membrane protein that promotes endoplasmic reticulum-associated endosome fission. Localizes to contact sites between the endoplasmic reticulum and endosomes and acts by promoting recruitment of the endoplasmic reticulum to endosome tubules for fission. Endosome membrane fission of early and late endosomes is essential to separate regions destined for lysosomal degradation from carriers to be recycled to the plasma membrane. This is Transmembrane and coiled-coil domains protein 1 from Homo sapiens (Human).